A 109-amino-acid polypeptide reads, in one-letter code: uncharacterized protein (109 aa).

A helical membrane pass occupies residues 63 to 85 (LFVKTFFACTYIIMLAFQVYIFL).

It is found in the membrane. This is an uncharacterized protein from Saccharomyces cerevisiae (strain ATCC 204508 / S288c) (Baker's yeast).